The following is a 353-amino-acid chain: 3-isopropylmalate dehydrogenase (353 aa).

76-89 contributes to the NAD(+) binding site; the sequence is GPKWDDPRAKVRPE. Positions 96, 106, 134, and 223 each coordinate substrate. Mg(2+)-binding residues include D223, D247, and D251. 281 to 293 contacts NAD(+); that stretch reads GSAPDIAGKGIAN.

This sequence belongs to the isocitrate and isopropylmalate dehydrogenases family. LeuB type 1 subfamily. As to quaternary structure, homodimer. Mg(2+) is required as a cofactor. It depends on Mn(2+) as a cofactor.

Its subcellular location is the cytoplasm. It catalyses the reaction (2R,3S)-3-isopropylmalate + NAD(+) = 4-methyl-2-oxopentanoate + CO2 + NADH. The protein operates within amino-acid biosynthesis; L-leucine biosynthesis; L-leucine from 3-methyl-2-oxobutanoate: step 3/4. Its function is as follows. Catalyzes the oxidation of 3-carboxy-2-hydroxy-4-methylpentanoate (3-isopropylmalate) to 3-carboxy-4-methyl-2-oxopentanoate. The product decarboxylates to 4-methyl-2 oxopentanoate. The polypeptide is 3-isopropylmalate dehydrogenase (Anaeromyxobacter dehalogenans (strain 2CP-C)).